The chain runs to 196 residues: Peptide deformylase (196 aa).

Positions 105 and 147 each coordinate Fe cation. Residue E148 is part of the active site. Fe cation is bound at residue H151.

This sequence belongs to the polypeptide deformylase family. Fe(2+) serves as cofactor.

It catalyses the reaction N-terminal N-formyl-L-methionyl-[peptide] + H2O = N-terminal L-methionyl-[peptide] + formate. In terms of biological role, removes the formyl group from the N-terminal Met of newly synthesized proteins. Requires at least a dipeptide for an efficient rate of reaction. N-terminal L-methionine is a prerequisite for activity but the enzyme has broad specificity at other positions. The protein is Peptide deformylase of Christiangramia forsetii (strain DSM 17595 / CGMCC 1.15422 / KT0803) (Gramella forsetii).